Here is a 398-residue protein sequence, read N- to C-terminus: Acetate kinase (398 aa).

Asparagine 7 lines the Mg(2+) pocket. Lysine 14 lines the ATP pocket. Arginine 92 contributes to the substrate binding site. Aspartate 149 serves as the catalytic Proton donor/acceptor. ATP is bound by residues 209–213 (HLGNG), 284–286 (DFR), and 332–336 (GVGEN). Glutamate 385 contributes to the Mg(2+) binding site.

This sequence belongs to the acetokinase family. In terms of assembly, homodimer. Mg(2+) is required as a cofactor. Mn(2+) serves as cofactor.

Its subcellular location is the cytoplasm. It carries out the reaction acetate + ATP = acetyl phosphate + ADP. The protein operates within metabolic intermediate biosynthesis; acetyl-CoA biosynthesis; acetyl-CoA from acetate: step 1/2. Its function is as follows. Catalyzes the formation of acetyl phosphate from acetate and ATP. Can also catalyze the reverse reaction. The sequence is that of Acetate kinase from Clostridioides difficile (strain 630) (Peptoclostridium difficile).